Here is a 121-residue protein sequence, read N- to C-terminus: Small ribosomal subunit protein uS13 (121 aa).

The interval 96–121 (PVRGQNTKNNARTRKGKAVAIAGKKK) is disordered. The segment covering 106 to 121 (ARTRKGKAVAIAGKKK) has biased composition (basic residues).

It belongs to the universal ribosomal protein uS13 family. As to quaternary structure, part of the 30S ribosomal subunit. Forms a loose heterodimer with protein S19. Forms two bridges to the 50S subunit in the 70S ribosome.

In terms of biological role, located at the top of the head of the 30S subunit, it contacts several helices of the 16S rRNA. In the 70S ribosome it contacts the 23S rRNA (bridge B1a) and protein L5 of the 50S subunit (bridge B1b), connecting the 2 subunits; these bridges are implicated in subunit movement. Contacts the tRNAs in the A and P-sites. This Streptococcus suis (strain 05ZYH33) protein is Small ribosomal subunit protein uS13.